The primary structure comprises 426 residues: Mannose-6-phosphate isomerase (426 aa).

Residues glutamine 112, histidine 114, glutamate 139, and histidine 277 each coordinate Zn(2+). The active site involves arginine 296.

Belongs to the mannose-6-phosphate isomerase type 1 family. It depends on Zn(2+) as a cofactor.

It is found in the cytoplasm. The catalysed reaction is D-mannose 6-phosphate = D-fructose 6-phosphate. The protein operates within nucleotide-sugar biosynthesis; GDP-alpha-D-mannose biosynthesis; alpha-D-mannose 1-phosphate from D-fructose 6-phosphate: step 1/2. Functionally, involved in the synthesis of the GDP-mannose and dolichol-phosphate-mannose required for a number of critical mannosyl transfer reactions. The chain is Mannose-6-phosphate isomerase (PMI40) from Ogataea parapolymorpha (strain ATCC 26012 / BCRC 20466 / JCM 22074 / NRRL Y-7560 / DL-1) (Yeast).